The following is a 923-amino-acid chain: Phosphoenolpyruvate carboxylase (923 aa).

Residues histidine 149 and lysine 585 contribute to the active site.

This sequence belongs to the PEPCase type 1 family. The cofactor is Mg(2+).

It catalyses the reaction oxaloacetate + phosphate = phosphoenolpyruvate + hydrogencarbonate. Its function is as follows. Forms oxaloacetate, a four-carbon dicarboxylic acid source for the tricarboxylic acid cycle. The sequence is that of Phosphoenolpyruvate carboxylase from Nocardia farcinica (strain IFM 10152).